The primary structure comprises 284 residues: 2,3,4,5-tetrahydropyridine-2,6-dicarboxylate N-succinyltransferase (284 aa).

2 residues coordinate substrate: Arg111 and Asp148.

It belongs to the transferase hexapeptide repeat family. In terms of assembly, homotrimer.

The protein localises to the cytoplasm. The catalysed reaction is (S)-2,3,4,5-tetrahydrodipicolinate + succinyl-CoA + H2O = (S)-2-succinylamino-6-oxoheptanedioate + CoA. It functions in the pathway amino-acid biosynthesis; L-lysine biosynthesis via DAP pathway; LL-2,6-diaminopimelate from (S)-tetrahydrodipicolinate (succinylase route): step 1/3. In Brucella anthropi (strain ATCC 49188 / DSM 6882 / CCUG 24695 / JCM 21032 / LMG 3331 / NBRC 15819 / NCTC 12168 / Alc 37) (Ochrobactrum anthropi), this protein is 2,3,4,5-tetrahydropyridine-2,6-dicarboxylate N-succinyltransferase.